The primary structure comprises 709 residues: Fatty acid oxidation complex subunit alpha (709 aa).

The tract at residues 1–188 (MEKTFNLTRR…KMGLVNDVVP (188 aa)) is enoyl-CoA hydratase. A 3-hydroxyacyl-CoA dehydrogenase region spans residues 308–709 (RKVKKAVILG…EMAAEKTRFF (402 aa)).

In the N-terminal section; belongs to the enoyl-CoA hydratase/isomerase family. It in the central section; belongs to the 3-hydroxyacyl-CoA dehydrogenase family. Heterotetramer of two alpha chains (FadJ) and two beta chains (FadI).

Its subcellular location is the cytoplasm. The enzyme catalyses a (3S)-3-hydroxyacyl-CoA = a (2E)-enoyl-CoA + H2O. The catalysed reaction is a 4-saturated-(3S)-3-hydroxyacyl-CoA = a (3E)-enoyl-CoA + H2O. It catalyses the reaction a (3S)-3-hydroxyacyl-CoA + NAD(+) = a 3-oxoacyl-CoA + NADH + H(+). It carries out the reaction (3S)-3-hydroxybutanoyl-CoA = (3R)-3-hydroxybutanoyl-CoA. Its pathway is lipid metabolism; fatty acid beta-oxidation. Its function is as follows. Catalyzes the formation of a hydroxyacyl-CoA by addition of water on enoyl-CoA. Also exhibits 3-hydroxyacyl-CoA epimerase and 3-hydroxyacyl-CoA dehydrogenase activities. The chain is Fatty acid oxidation complex subunit alpha from Shewanella sp. (strain MR-4).